Reading from the N-terminus, the 392-residue chain is Sex-determining region Y protein (392 aa).

The tract at residues 4-81 (HVKRPMNAFM…YKYQPHRRAK (78 aa)) is sufficient for interaction with KPNB1. The segment at residues 5-73 (VKRPMNAFMV…LHREKYPNYK (69 aa)) is a DNA-binding region (HMG box). 2 required for nuclear localization regions span residues 6–22 (KRPM…ERHK) and 75–81 (QPHRRAK). The tract at residues 52–84 (RPFFQEAQRLKILHREKYPNYKYQPHRRAKVSQ) is sufficient for interaction with EP300. Lys-81 carries the N6-acetyllysine modification. Residues 92–144 (AVASTKLYNLLQWDRNPHAITYRQDWSRAAHLYSKNQQSFYWQPVDIPTGHLQ) form a necessary for interaction with ZNF208 isoform KRAB-O region. Residues 94–138 (ASTKLYNLLQWDRNPHAITYRQDWSRAAHLYSKNQQSFYWQPVDI) form a necessary for interaction with SLC9A3R2 and nuclear accumulation of SLC9A3R2 region. A disordered region spans residues 142–361 (HLQQQQQQQQ…QQQQQQQQQQ (220 aa)). The span at 144-181 (QQQQQQQQQQQFHNHHQQQQQFYDHHQQQQQQQQQQQQ) shows a compositional bias: low complexity. 2 stretches are compositionally biased toward basic and acidic residues: residues 182 to 197 (FHDH…DHHQ) and 210 to 228 (QEQQ…HDHQ). Over residues 229-238 (QQQQQQQQQQ) the composition is skewed to low complexity. Basic and acidic residues-rich tracts occupy residues 239–250 (FHDHHQQKQQFH), 261–295 (FHDH…HDHP), and 313–349 (QFHD…DHHQ). The span at 350 to 361 (QQQQQQQQQQQQ) shows a compositional bias: low complexity.

It belongs to the SRY family. In terms of assembly, interacts with KPNB1, ZNF208 isoform KRAB-O, PARP1 and SLC9A3R2. The interaction with KPNB1 is sensitive to dissociation by Ran in the GTP-bound form. Interaction with PARP1 impaired its DNA-binding activity. Interacts with CALM, EP300, HDAC3 and WT1. The interaction with EP300 modulates its DNA-binding activity. Post-translationally, degraded due to the presence of a degron at the C-terminus that promotes its degradation. In terms of processing, phosphorylated on serine residues by PKA. Phosphorylation by PKA enhances its DNA-binding activity and stimulates transcription repression. Acetylation of Lys-81 contributes to its nuclear localization and enhances its interaction with KPNB1. Post-translationally, poly-ADP-ribosylated by PARP1. ADP-ribosylation reduces its DNA-binding activity. Expressed in gonadal somatic pre-Sertoli cells. Expressed in the substantia nigra of the brain (at protein level). Expressed in diencephalon, cortex, the substantia nigra of the midbrain and the medial mammillary bodies of the hypothalamus of male, but not female. In terms of tissue distribution, expressed in gonadal somatic pre-Sertoli cells. While it is expressed at lower level compared to isoform Sry-S, this form is more stable and constitutes the predominant protein product of the Sry locus in XY gonads (at protein level).

Its subcellular location is the nucleus speckle. It is found in the cytoplasm. The protein resides in the nucleus. Transcriptional regulator that controls a genetic switch in male development. It is necessary and sufficient for initiating male sex determination by directing the development of supporting cell precursors (pre-Sertoli cells) as Sertoli rather than granulosa cells. Involved in different aspects of gene regulation including promoter activation or repression. Binds to the DNA consensus sequence 5'-[AT]AACAA[AT]-3'. SRY HMG box recognizes DNA by partial intercalation in the minor groove and promotes DNA bending. Also involved in pre-mRNA splicing. In male adult brain involved in the maintenance of motor functions of dopaminergic neurons. Its function is as follows. Constitutes the major isoform, which is necessary and sufficient for initiating male sex determination. Functionally, constitutes a minor isoform, which is unstable due to the presence of a degron at the C-terminus that promotes its degradation. Not necessary and sufficient for initiating male sex determination. The sequence is that of Sex-determining region Y protein from Mus musculus (Mouse).